The following is a 1073-amino-acid chain: Carbamoyl phosphate synthase large chain (1073 aa).

The interval Pro2 to Glu403 is carboxyphosphate synthetic domain. ATP contacts are provided by Arg129, Arg169, Gly175, Gly176, Glu208, Leu210, Glu215, Gly241, Val242, His243, Gln285, and Glu299. Positions Asp133–Val328 constitute an ATP-grasp 1 domain. Residues Gln285, Glu299, and Asn301 each coordinate Mg(2+). Mn(2+)-binding residues include Gln285, Glu299, and Asn301. Residues Val404–Ala553 form an oligomerization domain region. The segment at Asn554–Ser935 is carbamoyl phosphate synthetic domain. Positions Gln678–Ala869 constitute an ATP-grasp 2 domain. The ATP site is built by Arg714, His753, Leu755, Glu760, Gly785, Val786, His787, Ser788, Gln828, and Glu840. Residues Gln828, Glu840, and Asn842 each coordinate Mg(2+). Mn(2+) contacts are provided by Gln828, Glu840, and Asn842. Residues Glu936–Ala1073 form the MGS-like domain. Residues Glu936–Ala1073 form an allosteric domain region.

The protein belongs to the CarB family. Composed of two chains; the small (or glutamine) chain promotes the hydrolysis of glutamine to ammonia, which is used by the large (or ammonia) chain to synthesize carbamoyl phosphate. Tetramer of heterodimers (alpha,beta)4. Mg(2+) serves as cofactor. The cofactor is Mn(2+).

The catalysed reaction is hydrogencarbonate + L-glutamine + 2 ATP + H2O = carbamoyl phosphate + L-glutamate + 2 ADP + phosphate + 2 H(+). It carries out the reaction hydrogencarbonate + NH4(+) + 2 ATP = carbamoyl phosphate + 2 ADP + phosphate + 2 H(+). It functions in the pathway amino-acid biosynthesis; L-arginine biosynthesis; carbamoyl phosphate from bicarbonate: step 1/1. Its pathway is pyrimidine metabolism; UMP biosynthesis via de novo pathway; (S)-dihydroorotate from bicarbonate: step 1/3. Its function is as follows. Large subunit of the glutamine-dependent carbamoyl phosphate synthetase (CPSase). CPSase catalyzes the formation of carbamoyl phosphate from the ammonia moiety of glutamine, carbonate, and phosphate donated by ATP, constituting the first step of 2 biosynthetic pathways, one leading to arginine and/or urea and the other to pyrimidine nucleotides. The large subunit (synthetase) binds the substrates ammonia (free or transferred from glutamine from the small subunit), hydrogencarbonate and ATP and carries out an ATP-coupled ligase reaction, activating hydrogencarbonate by forming carboxy phosphate which reacts with ammonia to form carbamoyl phosphate. The protein is Carbamoyl phosphate synthase large chain of Pseudomonas aeruginosa (strain ATCC 15692 / DSM 22644 / CIP 104116 / JCM 14847 / LMG 12228 / 1C / PRS 101 / PAO1).